Here is a 428-residue protein sequence, read N- to C-terminus: Probable G-protein coupled receptor (428 aa).

Residues 1–46 (MMADKTSPMITSDHSISNFSTGLFGPHPTVPPDVGVVTSSQSQMKD) are Extracellular-facing. A glycan (N-linked (GlcNAc...) asparagine) is linked at N18. A helical membrane pass occupies residues 47–67 (LFGLFCMVTLNLIALLANTGV). The Cytoplasmic portion of the chain corresponds to 68–93 (MVAIARAPHLKKFAFVCHLCAVDVLC). The chain crosses the membrane as a helical span at residues 94–114 (AILLMPLGIISSSPFFGTVVF). Over 115-120 (TILECQ) the chain is Extracellular. A helical membrane pass occupies residues 121–141 (VYIFLNVFLIWLSILTITAIS). Residues 142-162 (VERYFYIVHPMRYEVKMTINL) are Cytoplasmic-facing. A helical membrane pass occupies residues 163-183 (VIGVMLLIWFKSLLLALVTLF). The Extracellular portion of the chain corresponds to 184–210 (GWPPYGHQSSIAASHCSLHASHSRLRG). Residues 211 to 231 (VFAVLFCVICFLAPVVVIFSV) traverse the membrane as a helical segment. Residues 232–293 (YSAVYKVARS…PERAFSGGKA (62 aa)) lie on the Cytoplasmic side of the membrane. A helical membrane pass occupies residues 294–314 (ALTLAFIVGQFLVCWLPFFIF). Topologically, residues 315–428 (HLQMSLTGSM…IPGQIPEEQA (114 aa)) are extracellular. Residues 398–414 (SETHPSFANSNPRNMEN) are compositionally biased toward polar residues. A disordered region spans residues 398-428 (SETHPSFANSNPRNMENQAHKIPGQIPEEQA).

This sequence belongs to the G-protein coupled receptor 1 family.

Its subcellular location is the cell membrane. The protein is Probable G-protein coupled receptor of Oryzias latipes (Japanese rice fish).